A 302-amino-acid chain; its full sequence is CRISPR-associated endonuclease Cas1 1 (302 aa).

Mn(2+) is bound by residues glutamate 159, histidine 219, and glutamate 234.

It belongs to the CRISPR-associated endonuclease Cas1 family. Homodimer, forms a heterotetramer with a Cas2 homodimer. Mg(2+) is required as a cofactor. It depends on Mn(2+) as a cofactor.

Functionally, CRISPR (clustered regularly interspaced short palindromic repeat), is an adaptive immune system that provides protection against mobile genetic elements (viruses, transposable elements and conjugative plasmids). CRISPR clusters contain spacers, sequences complementary to antecedent mobile elements, and target invading nucleic acids. CRISPR clusters are transcribed and processed into CRISPR RNA (crRNA). Acts as a dsDNA endonuclease. Involved in the integration of spacer DNA into the CRISPR cassette. In Pyrobaculum aerophilum (strain ATCC 51768 / DSM 7523 / JCM 9630 / CIP 104966 / NBRC 100827 / IM2), this protein is CRISPR-associated endonuclease Cas1 1.